Here is a 401-residue protein sequence, read N- to C-terminus: MTENISNSSTQQLLALRVMRLARPKFAPLDGFSHDPVDPTGFGELLAGKVAEISKESRHDLPIGEYLIAPQMFENIYLGETFTFYVNVVNESESNVVNVSLKCELQTSTQRVVLPCSVQDVTIESTKCDGQVISHEVKEIGQHILICSVNYKTLSGENMYFRKFFKFPVSKPIDVKTKFYSAEDNANQDVYLEAQIENTSNSNMFLERVELDPSQHYKVTSISHEDEFPEVGKLLKPKDIRQFLFCLSPVDVNNTLGYKDLTSIGKLDMSWRTSMGEKGRLQTSALQRIAPGYGDVRLSVEKTPACVDVQKPFEVACRLYNCSERALDLQLRLEQPSNRQLVICSPSGVSLGQLPPSRYVDFALNVFPVAVGIQSISGIRITDTFTKRHYEHDDIAQIFVS.

Belongs to the TRAPPC13 family.

This Caenorhabditis briggsae protein is Probable trafficking protein particle complex subunit 13 homolog.